The primary structure comprises 501 residues: Solute carrier family 2, facilitated glucose transporter member 5 (501 aa).

An N-acetylmethionine modification is found at M1. Topologically, residues 1–18 (MEQQDQSMKEGRLTLVLA) are cytoplasmic. The helical transmembrane segment at 19–39 (LATLIAAFGSSFQYGYNVAAV) threads the bilayer. D-fructose is bound at residue Y32. Residues 40 to 68 (NSPALLMQQFYNETYYGRTGEFMEDFPLT) lie on the Extracellular side of the membrane. N51 carries N-linked (GlcNAc...) asparagine glycosylation. Residues 69-91 (LLWSVTVSMFPFGGFIGSLLVGP) traverse the membrane as a helical segment. Residues 92 to 98 (LVNKFGR) lie on the Cytoplasmic side of the membrane. Residues 99-119 (KGALLFNNIFSIVPAILMGCS) traverse the membrane as a helical segment. The Extracellular portion of the chain corresponds to 120–126 (RVATSFE). Residues 127–149 (LIIISRLLVGICAGVSSNVVPMY) traverse the membrane as a helical segment. The Cytoplasmic segment spans residues 150–161 (LGELAPKNLRGA). Residues 162 to 182 (LGVVPQLFITVGILVAQIFGL) form a helical membrane-spanning segment. Residue Q167 participates in D-fructose binding. The Extracellular segment spans residues 183–192 (RNLLANVDGW). Residues 193 to 213 (PILLGLTGVPAALQLLLLPFF) traverse the membrane as a helical segment. Over 214-277 (PESPRYLLIQ…LFRMRSLRWQ (64 aa)) the chain is Cytoplasmic. A helical transmembrane segment spans residues 278 to 298 (LLSIIVLMGGQQLSGVNAIYY). Residues Q288 and 296–298 (IYY) contribute to the D-fructose site. Residues 299 to 313 (YADQIYLSAGVPEEH) lie on the Extracellular side of the membrane. Residues 314 to 334 (VQYVTAGTGAVNVVMTFCAVF) form a helical membrane-spanning segment. Residues 335-342 (VVELLGRR) lie on the Cytoplasmic side of the membrane. The chain crosses the membrane as a helical span at residues 343-363 (LLLLLGFSICLIACCVLTAAL). The Extracellular segment spans residues 364–371 (ALQDTVSW). The helical transmembrane segment at 372–394 (MPYISIVCVISYVIGHALGPSPI) threads the bilayer. Position 387 (H387) interacts with D-fructose. Residues 395-412 (PALLITEIFLQSSRPSAF) are Cytoplasmic-facing. A helical membrane pass occupies residues 413–433 (MVGGSVHWLSNFTVGLIFPFI). Residue 419 to 420 (HW) coordinates D-fructose. Over 434 to 439 (QEGLGP) the chain is Extracellular. A helical membrane pass occupies residues 440–460 (YSFIVFAVICLLTTIYIFLIV). The Cytoplasmic segment spans residues 461–501 (PETKAKTFIEINQIFTKMNKVSEVYPEKEELKELPPVTSEQ).

In terms of tissue distribution, detected in skeletal muscle, and in jejunum brush border membrane and basolateral membrane (at protein level). Expressed in small intestine, and at much lower levels in kidney, skeletal muscle, and adipose tissue.

It is found in the apical cell membrane. Its subcellular location is the cell membrane. The protein resides in the sarcolemma. The catalysed reaction is D-fructose(out) = D-fructose(in). With respect to regulation, the uptake of 2-deoxyglucose is inhibited by cytochalasin B. Fructose transport is inhibited by the flavonoids epigallocatechin gallate and apigenin but not quercetin. Functionally, functions as a fructose transporter that has only low activity with other monosaccharides. Can mediate the uptake of 2-deoxyglucose, but with low efficiency. Essential for fructose uptake in the small intestine. Plays a role in the regulation of salt uptake and blood pressure in response to dietary fructose. Required for the development of high blood pressure in response to high dietary fructose intake. This chain is Solute carrier family 2, facilitated glucose transporter member 5, found in Homo sapiens (Human).